The chain runs to 125 residues: Calcitonin receptor-stimulating peptide 1 (125 aa).

The N-terminal stretch at 1–25 (MGFWKFPPFLVLSILVLYQAGMFHA) is a signal peptide. The propeptide occupies 26-77 (APFRSVFDGRFDPATLDEEESRLLLAAMVNDYEQMRARESEKAQKTEGSRIQ). Cys-81 and Cys-86 are joined by a disulfide.

Belongs to the calcitonin family.

The protein localises to the secreted. Its function is as follows. Stimulates cAMP production in porcine kidney cell line LLC-PK1 via the calcitonin receptor (CT) but not via the CT-like (CL) receptor. This Capra hircus (Goat) protein is Calcitonin receptor-stimulating peptide 1 (CRSP1).